The sequence spans 895 residues: Androgen receptor (895 aa).

A modulating region spans residues 1–533; the sequence is MEVQLGLGRV…PIDYYFPPQK (533 aa). Residues 1-562 form an interaction with ZNF318 region; sequence MEVQLGLGRV…GSCKVFFKRA (562 aa). Disordered stretches follow at residues 33–150 and 175–211; these read VIQN…LSLL and QLLQ…YLGG. Composition is skewed to low complexity over residues 44–81 and 175–200; these read AASA…GSPQ and QLLQ…ASGA. S65 carries the post-translational modification Phosphoserine; by CDK9. The residue at position 79 (S79) is a Phosphoserine. The segment covering 201-211 has biased composition (polar residues); that stretch reads PTSSKDNYLGG. Y208 is subject to Phosphotyrosine; by CSK. A Phosphoserine modification is found at S241. Residue Y252 is modified to Phosphotyrosine; by CSK and TNK2. Residues Y292, Y331, Y342, and Y347 each carry the phosphotyrosine; by CSK modification. At Y348 the chain carries Phosphotyrosine; by CSK and TNK2. K371 participates in a covalent cross-link: Glycyl lysine isopeptide (Lys-Gly) (interchain with G-Cter in SUMO). Y378 is subject to Phosphotyrosine; by CSK. K496 participates in a covalent cross-link: Glycyl lysine isopeptide (Lys-Gly) (interchain with G-Cter in SUMO). 2 positions are modified to phosphotyrosine; by CSK: Y510 and Y527. The tract at residues 527–894 is interaction with LPXN; it reads YYFPPQKTCL…GKVKPIYFHT (368 aa). The segment at residues 534-607 is a DNA-binding region (nuclear receptor); sequence TCLICGDEAS…AGMTLGARKL (74 aa). 2 NR C4-type zinc fingers span residues 535–555 and 571–595; these read CLIC…CGSC and CASR…LRKC. Residues 547 to 637 are interaction with HIPK3; that stretch reads YGALTCGSCK…TEETAQKLTV (91 aa). The segment at 567 to 894 is interaction with CCAR1; the sequence is QKYLCASRND…GKVKPIYFHT (328 aa). The tract at residues 600–894 is interaction with KAT7; it reads MTLGARKLKK…GKVKPIYFHT (295 aa). Residue S626 is modified to Phosphoserine; by STK4/MST1. Residues 644–875 enclose the NR LBD domain; it reads ECQPIFLNVL…DFPEMMAEII (232 aa). Residues N681 and R728 each contribute to the 17beta-hydroxy-5alpha-androstan-3-one site. Glycyl lysine isopeptide (Lys-Gly) (interchain with G-Cter in ubiquitin) cross-links involve residues K821 and K823. T853 is a binding site for 17beta-hydroxy-5alpha-androstan-3-one. Y891 carries the post-translational modification Phosphotyrosine; by CSK.

This sequence belongs to the nuclear hormone receptor family. NR3 subfamily. Binds DNA as a homodimer. Part of a ternary complex containing AR, EFCAB6/DJBP and PARK7. Interacts with HIPK3 and NR0B2 in the presence of androgen. The ligand binding domain interacts with KAT7/HBO1 in the presence of dihydrotestosterone. Interacts with EFCAB6/DJBP, PQBP1, RANBP9, RBAK, SPDEF, SRA1, TGFB1I1 and RREB1. Interacts with ZMIZ1/ZIMP10 and ZMIZ2/ZMIP7 which both enhance its transactivation activity. Interacts with SLC30A9 and RAD54L2/ARIP4. Interacts with MACROD1 (via macro domain). Interacts via the ligand-binding domain with LXXLL and FXXLF motifs from NCOA1, NCOA2, NCOA3 and MAGEA11. Interacts (via nuclear receptor DNA binding domain and nuclear receptor ligand binding domain) with NCOA4. The AR N-terminal poly-Gln region binds Ran resulting in enhancement of AR-mediated transactivation. Ran-binding decreases as the poly-Gln length increases. Interacts with HIP1 (via coiled coil domain). Interacts (via ligand-binding domain) with TRIM68. Interacts with TNK2. Interacts with USP26. Interacts with RNF6. Interacts (regulated by RNF6 probably through polyubiquitination) with RNF14; regulates AR transcriptional activity. Interacts with PRMT2 and TRIM24. Interacts with RACK1. Interacts with RANBP10; this interaction enhances dihydrotestosterone-induced AR transcriptional activity. Interacts with PRPF6 in a hormone-independent way; this interaction enhances dihydrotestosterone-induced AR transcriptional activity. Interacts with STK4/MST1. Interacts with ZIPK/DAPK3. Interacts with LPXN. Interacts with MAK. Part of a complex containing AR, MAK and NCOA3. Interacts with CRY1. Interacts with CCAR1 and GATA2. Interacts with ZNF318. Interacts with BUD31. Interacts with ARID4A. Interacts with ARID4B. Interacts (via NR LBD domain) with ZBTB7A; the interaction is direct and androgen-dependent. Interacts with NCOR1. Interacts with NCOR2. Interacts with CRY2 in a ligand-dependent manner. Post-translationally, phosphorylated in prostate cancer cells in response to several growth factors including EGF. Phosphorylation is induced by c-Src kinase (CSK). Tyr-510 is one of the major phosphorylation sites and an increase in phosphorylation and Src kinase activity is associated with prostate cancer progression. Phosphorylation by TNK2 enhances the DNA-binding and transcriptional activity. Phosphorylation at Ser-65 by CDK9 regulates AR promoter selectivity and cell growth. In terms of processing, sumoylated on Lys-371 (major) and Lys-496. Ubiquitinated. Deubiquitinated by USP26. 'Lys-6' and 'Lys-27'-linked polyubiquitination by RNF6 modulates AR transcriptional activity and specificity. Palmitoylated by ZDHHC7 and ZDHHC21. Palmitoylation is required for plasma membrane targeting and for rapid intracellular signaling via ERK and AKT kinases and cAMP generation.

The protein localises to the nucleus. The protein resides in the cytoplasm. Functionally, steroid hormone receptors are ligand-activated transcription factors that regulate eukaryotic gene expression and affect cellular proliferation and differentiation in target tissues. Transcription factor activity is modulated by bound coactivator and corepressor proteins like ZBTB7A that recruits NCOR1 and NCOR2 to the androgen response elements/ARE on target genes, negatively regulating androgen receptor signaling and androgen-induced cell proliferation. Transcription activation is also down-regulated by NR0B2. Activated, but not phosphorylated, by HIPK3 and ZIPK/DAPK3. In Macaca fascicularis (Crab-eating macaque), this protein is Androgen receptor (AR).